We begin with the raw amino-acid sequence, 214 residues long: Thymidylate kinase (214 aa).

10–17 (GGEGAGKS) lines the ATP pocket.

This sequence belongs to the thymidylate kinase family.

It carries out the reaction dTMP + ATP = dTDP + ADP. Functionally, phosphorylation of dTMP to form dTDP in both de novo and salvage pathways of dTTP synthesis. The protein is Thymidylate kinase of Brucella canis (strain ATCC 23365 / NCTC 10854 / RM-666).